A 448-amino-acid polypeptide reads, in one-letter code: Potassium/proton antiporter CemA (448 aa).

The next 4 helical transmembrane spans lie at 224–244 (ALAS…ISML), 325–345 (IILH…LFII), 373–393 (ILLL…EIVI), and 408–428 (IISC…KYWI).

It belongs to the CemA family.

It localises to the plastid. Its subcellular location is the chloroplast inner membrane. The enzyme catalyses K(+)(in) + H(+)(out) = K(+)(out) + H(+)(in). Contributes to K(+)/H(+) antiport activity by supporting proton efflux to control proton extrusion and homeostasis in chloroplasts in a light-dependent manner to modulate photosynthesis. Prevents excessive induction of non-photochemical quenching (NPQ) under continuous-light conditions. Indirectly promotes efficient inorganic carbon uptake into chloroplasts. The chain is Potassium/proton antiporter CemA from Angiopteris evecta (Mule's foot fern).